A 226-amino-acid chain; its full sequence is NADH-quinone oxidoreductase subunit C (226 aa).

The interval 1–21 (MTEPTGDQTPEIIGVRRGMFG) is disordered.

It belongs to the complex I 30 kDa subunit family. NDH-1 is composed of 14 different subunits. Subunits NuoB, C, D, E, F, and G constitute the peripheral sector of the complex.

The protein resides in the cell membrane. It carries out the reaction a quinone + NADH + 5 H(+)(in) = a quinol + NAD(+) + 4 H(+)(out). In terms of biological role, NDH-1 shuttles electrons from NADH, via FMN and iron-sulfur (Fe-S) centers, to quinones in the respiratory chain. The immediate electron acceptor for the enzyme in this species is believed to be a menaquinone. Couples the redox reaction to proton translocation (for every two electrons transferred, four hydrogen ions are translocated across the cytoplasmic membrane), and thus conserves the redox energy in a proton gradient. The chain is NADH-quinone oxidoreductase subunit C from Mycolicibacterium gilvum (strain PYR-GCK) (Mycobacterium gilvum (strain PYR-GCK)).